The chain runs to 387 residues: Migration and invasion-inhibitory protein (387 aa).

The segment covering 50–59 (NLEMPLSQET) has biased composition (polar residues). Disordered regions lie at residues 50 to 80 (NLEMPLSQETSSASSVAPSSQDKRHMLDPLD) and 133 to 172 (VSLGGPKGLGPDKTQVPRSILSRLSKPSKPRVTSQESAVP). Residues 60 to 69 (SSASSVAPSS) show a composition bias toward low complexity. Positions 70-80 (QDKRHMLDPLD) are enriched in basic and acidic residues. Phosphoserine is present on Ser-307.

In terms of assembly, interacts with IGFBP2.

Functionally, inhibits glioma cells invasion and down-regulates adhesion- and motility-associated genes such as NFKB2 and ICAM1. Exhibits opposing effects to IGFBP2 on cell invasion. In Mus musculus (Mouse), this protein is Migration and invasion-inhibitory protein (Miip).